The chain runs to 431 residues: UDP-N-acetylglucosamine 1-carboxyvinyltransferase (431 aa).

25-26 (KN) provides a ligand contact to phosphoenolpyruvate. Arginine 101 lines the UDP-N-acetyl-alpha-D-glucosamine pocket. Catalysis depends on cysteine 125, which acts as the Proton donor. The residue at position 125 (cysteine 125) is a 2-(S-cysteinyl)pyruvic acid O-phosphothioketal. Residues aspartate 317 and isoleucine 339 each contribute to the UDP-N-acetyl-alpha-D-glucosamine site.

The protein belongs to the EPSP synthase family. MurA subfamily.

It localises to the cytoplasm. The catalysed reaction is phosphoenolpyruvate + UDP-N-acetyl-alpha-D-glucosamine = UDP-N-acetyl-3-O-(1-carboxyvinyl)-alpha-D-glucosamine + phosphate. The protein operates within cell wall biogenesis; peptidoglycan biosynthesis. In terms of biological role, cell wall formation. Adds enolpyruvyl to UDP-N-acetylglucosamine. The polypeptide is UDP-N-acetylglucosamine 1-carboxyvinyltransferase (Thermobifida fusca (strain YX)).